We begin with the raw amino-acid sequence, 1829 residues long: Protein TIC 214 (1829 aa).

6 helical membrane passes run 18 to 38 (IINS…FSIG), 67 to 87 (FIAG…HLAL), 90 to 110 (PHTI…WNNP), 127 to 147 (LSIQ…HFLL), 174 to 194 (FVGW…VLVW), and 224 to 244 (IFSI…PSPI). Over residues 260–272 (RDVEIEKTFERGG) the composition is skewed to basic and acidic residues. Residues 260-301 (RDVEIEKTFERGGTKQGQEVSAEEDPSPSLFSEEKEDPDKIE) form a disordered region.

This sequence belongs to the TIC214 family. As to quaternary structure, part of the Tic complex.

It localises to the plastid. It is found in the chloroplast inner membrane. In terms of biological role, involved in protein precursor import into chloroplasts. May be part of an intermediate translocation complex acting as a protein-conducting channel at the inner envelope. This Citrus sinensis (Sweet orange) protein is Protein TIC 214.